A 303-amino-acid polypeptide reads, in one-letter code: Elongation factor Ts (303 aa).

The involved in Mg(2+) ion dislocation from EF-Tu stretch occupies residues 80 to 83; the sequence is TDFV.

This sequence belongs to the EF-Ts family.

The protein resides in the cytoplasm. Functionally, associates with the EF-Tu.GDP complex and induces the exchange of GDP to GTP. It remains bound to the aminoacyl-tRNA.EF-Tu.GTP complex up to the GTP hydrolysis stage on the ribosome. This Clostridium botulinum (strain Alaska E43 / Type E3) protein is Elongation factor Ts.